Reading from the N-terminus, the 134-residue chain is Phosphoribosyl-AMP cyclohydrolase (134 aa).

D80 is a Mg(2+) binding site. C81 is a Zn(2+) binding site. The Mg(2+) site is built by D82 and D84. Positions 98 and 105 each coordinate Zn(2+).

It belongs to the PRA-CH family. In terms of assembly, homodimer. The cofactor is Mg(2+). Requires Zn(2+) as cofactor.

It is found in the cytoplasm. It catalyses the reaction 1-(5-phospho-beta-D-ribosyl)-5'-AMP + H2O = 1-(5-phospho-beta-D-ribosyl)-5-[(5-phospho-beta-D-ribosylamino)methylideneamino]imidazole-4-carboxamide. It functions in the pathway amino-acid biosynthesis; L-histidine biosynthesis; L-histidine from 5-phospho-alpha-D-ribose 1-diphosphate: step 3/9. Functionally, catalyzes the hydrolysis of the adenine ring of phosphoribosyl-AMP. The sequence is that of Phosphoribosyl-AMP cyclohydrolase from Janthinobacterium sp. (strain Marseille) (Minibacterium massiliensis).